A 712-amino-acid polypeptide reads, in one-letter code: T-box transcription factor TBX2 (712 aa).

The segment at residues 109–287 (LEAKELWDQF…NNPFAKGFRD (179 aa)) is a DNA-binding region (T-box). The segment at 313-449 (PERDGAESDA…EGKEPGLAPL (137 aa)) is disordered. A phosphoserine mark is found at Ser336, Ser342, and Ser359. Composition is skewed to basic and acidic residues over residues 349–371 (TRAD…EERA), 390–408 (TEPE…KEPA), and 420–443 (SLEK…EGKE). The tract at residues 517–601 (GGGGGGGGGP…ATSAAAAAAA (85 aa)) is repression domain 1 (RD1). Phosphoserine occurs at positions 622, 653, 657, and 676. 2 disordered regions span residues 642-661 (AAEG…PLPE) and 666-688 (KVGA…ASEL).

In terms of assembly, binds DNA as a monomer. Interacts with PML (isoform PML-2, isoform PML-3 and isoform PML-4).

It is found in the nucleus. In terms of biological role, transcription factor which acts as a transcriptional repressor. May also function as a transcriptional activator. Binds to the palindromic T site 5'-TTCACACCTAGGTGTGAA-3' DNA sequence, or a half-site, which are present in the regulatory region of several genes. Required for cardiac atrioventricular canal formation. May cooperate with NKX2.5 to negatively modulate expression of NPPA/ANF in the atrioventricular canal. May play a role as a positive regulator of TGFB2 expression, perhaps acting in concert with GATA4 in the developing outflow tract myocardium. Plays a role in limb pattern formation. Acts as a transcriptional repressor of ADAM10 gene expression, perhaps in concert with histone deacetylase HDAC1 as cofactor. Involved in branching morphogenesis in both developing lungs and adult mammary glands, via negative modulation of target genes; acting redundantly with TBX3. Required, together with TBX3, to maintain cell proliferation in the embryonic lung mesenchyme; perhaps acting downstream of SHH, BMP and TGFbeta signaling. Involved in modulating early inner ear development, acting independently of, and also redundantly with TBX3, in different subregions of the developing ear. Acts as a negative regulator of PML function in cellular senescence. Acts as a negative regulator of expression of CDKN1A/p21, IL33 and CCN4; repression of CDKN1A is enhanced in response to UV-induced stress, perhaps as a result of phosphorylation by p38 MAPK. Negatively modulates expression of CDKN2A/p14ARF and CDH1/E-cadherin. Plays a role in induction of the epithelial-mesenchymal transition (EMT). Plays a role in melanocyte proliferation, perhaps via regulation of cyclin CCND1. Involved in melanogenesis, acting via negative modulation of expression of DHICA oxidase/TYRP1 and P protein/OCA2. Involved in regulating retinal pigment epithelium (RPE) cell proliferation, perhaps via negatively modulating transcription of the transcription factor CEBPD. The chain is T-box transcription factor TBX2 (TBX2) from Canis lupus familiaris (Dog).